A 210-amino-acid polypeptide reads, in one-letter code: FMN-dependent NADH:quinone oxidoreductase (210 aa).

FMN is bound by residues Ser10 and 16 to 18; that span reads SRS.

This sequence belongs to the azoreductase type 1 family. As to quaternary structure, homodimer. FMN is required as a cofactor.

It catalyses the reaction 2 a quinone + NADH + H(+) = 2 a 1,4-benzosemiquinone + NAD(+). The catalysed reaction is N,N-dimethyl-1,4-phenylenediamine + anthranilate + 2 NAD(+) = 2-(4-dimethylaminophenyl)diazenylbenzoate + 2 NADH + 2 H(+). Functionally, quinone reductase that provides resistance to thiol-specific stress caused by electrophilic quinones. Also exhibits azoreductase activity. Catalyzes the reductive cleavage of the azo bond in aromatic azo compounds to the corresponding amines. This chain is FMN-dependent NADH:quinone oxidoreductase, found in Kineococcus radiotolerans (strain ATCC BAA-149 / DSM 14245 / SRS30216).